The primary structure comprises 588 residues: uncharacterized protein (588 aa).

The first 19 residues, 1–19 (MRSTAYLTALLSFLGATHA), serve as a signal peptide directing secretion. Residues Asn-45 and Asn-104 are each glycosylated (N-linked (GlcNAc...) asparagine). In terms of domain architecture, FAD-binding PCMH-type spans 118–303 (GQGRIPLYSA…TSVTLRTFKD (186 aa)). At His-156 the chain carries Pros-8alpha-FAD histidine. N-linked (GlcNAc...) asparagine glycans are attached at residues Asn-179, Asn-312, Asn-320, Asn-351, Asn-370, and Asn-446.

It belongs to the oxygen-dependent FAD-linked oxidoreductase family. Requires FAD as cofactor.

The protein resides in the secreted. This is an uncharacterized protein from Arthroderma benhamiae (strain ATCC MYA-4681 / CBS 112371) (Trichophyton mentagrophytes).